Reading from the N-terminus, the 825-residue chain is Fibrous sheath CABYR-binding protein (825 aa).

Disordered stretches follow at residues 1 to 43 (MVGK…SYSA) and 113 to 139 (QDVE…RTGY). Residues 21-40 (KSSSPKATHRIGNTSGSKGS) show a composition bias toward polar residues. At serine 160 the chain carries Phosphoserine. 3 disordered regions span residues 168 to 232 (SRPD…LLED), 244 to 718 (QEGS…DKHS), and 732 to 751 (GEAS…EDEA). Residues 200–220 (PATNSNEEIGQKNISRTSFTQ) are compositionally biased toward polar residues. The segment covering 277 to 290 (ATAKAEPRPAEETH) has biased composition (basic and acidic residues). Low complexity-rich tracts occupy residues 348–357 (AEILPPSAEE) and 398–407 (PLPAEGALEE). A compositionally biased stretch (pro residues) spans 610-676 (VQPPPAEEAP…PAEVQPPPAE (67 aa)).

In terms of assembly, interacts with CABYR. Interacts with ROPN1 and ROPN1L; the interaction increases upon spermatozoa capacitation conditions. In terms of processing, phosphorylated by PKA upon spermatozoa capacitation conditions.

It localises to the cell projection. It is found in the cilium. The protein localises to the flagellum. May be involved in the later stages of fibrous sheath biogenesis and spermatozoa capacitation. Inhibits ROPN1 and ROPN1L SUMOylation. Binds calcium. In Homo sapiens (Human), this protein is Fibrous sheath CABYR-binding protein (FSCB).